The following is a 1025-amino-acid chain: Probable beta-galactosidase B (1025 aa).

An N-terminal signal peptide occupies residues 1–21; sequence MATAFWLLLFLLGSLHVLTAA. N-linked (GlcNAc...) asparagine glycosylation is present at Asn23. Tyr90 lines the substrate pocket. N-linked (GlcNAc...) asparagine glycosylation occurs at Asn100. Residues Asn135, Ala136, Glu137, and Asn195 each contribute to the substrate site. The active-site Proton donor is the Glu196. Residue Asn211 is glycosylated (N-linked (GlcNAc...) asparagine). Tyr265 lines the substrate pocket. The cysteines at positions 271 and 324 are disulfide-linked. Glu308 acts as the Nucleophile in catalysis. Tyr373 is a binding site for substrate. N-linked (GlcNAc...) asparagine glycosylation is found at Asn411, Asn456, Asn736, Asn776, Asn884, Asn925, and Asn926.

Belongs to the glycosyl hydrolase 35 family.

It is found in the secreted. It catalyses the reaction Hydrolysis of terminal non-reducing beta-D-galactose residues in beta-D-galactosides.. Functionally, cleaves beta-linked terminal galactosyl residues from gangliosides, glycoproteins, and glycosaminoglycans. The sequence is that of Probable beta-galactosidase B (lacB) from Emericella nidulans (strain FGSC A4 / ATCC 38163 / CBS 112.46 / NRRL 194 / M139) (Aspergillus nidulans).